Reading from the N-terminus, the 168-residue chain is NADH-quinone oxidoreductase subunit B (168 aa).

Residues Cys-49, Cys-50, Cys-114, and Cys-144 each contribute to the [4Fe-4S] cluster site.

The protein belongs to the complex I 20 kDa subunit family. As to quaternary structure, NDH-1 is composed of 14 different subunits. Subunits NuoB, C, D, E, F, and G constitute the peripheral sector of the complex. It depends on [4Fe-4S] cluster as a cofactor.

The protein localises to the cell membrane. The enzyme catalyses a quinone + NADH + 5 H(+)(in) = a quinol + NAD(+) + 4 H(+)(out). In terms of biological role, NDH-1 shuttles electrons from NADH, via FMN and iron-sulfur (Fe-S) centers, to quinones in the respiratory chain. Couples the redox reaction to proton translocation (for every two electrons transferred, four hydrogen ions are translocated across the cytoplasmic membrane), and thus conserves the redox energy in a proton gradient. This chain is NADH-quinone oxidoreductase subunit B, found in Wolbachia sp. subsp. Brugia malayi (strain TRS).